Consider the following 716-residue polypeptide: Polyribonucleotide nucleotidyltransferase (716 aa).

Mg(2+) contacts are provided by aspartate 490 and aspartate 496. Positions 556-615 constitute a KH domain; that stretch reads PKIETLTIPTDKIREVIGSGGKVIREIVETSGAKVDINDDGVIKIASNDQAAIKKAYDMI. Positions 625-693 constitute an S1 motif domain; sequence GQIYTGKVVK…ERGKVRLGMK (69 aa). The tract at residues 695-716 is disordered; that stretch reads VDQETGQEIQPEKKEKEEAGEA. Residues 704–716 are compositionally biased toward basic and acidic residues; it reads QPEKKEKEEAGEA.

The protein belongs to the polyribonucleotide nucleotidyltransferase family. The cofactor is Mg(2+).

It localises to the cytoplasm. The enzyme catalyses RNA(n+1) + phosphate = RNA(n) + a ribonucleoside 5'-diphosphate. Functionally, involved in mRNA degradation. Catalyzes the phosphorolysis of single-stranded polyribonucleotides processively in the 3'- to 5'-direction. The protein is Polyribonucleotide nucleotidyltransferase of Cereibacter sphaeroides (strain ATCC 17029 / ATH 2.4.9) (Rhodobacter sphaeroides).